Consider the following 282-residue polypeptide: Small ribosomal subunit protein uS2 (282 aa).

Positions 245 to 266 are disordered; it reads AEEAVEELPLPTGEAQDEASSK.

Belongs to the universal ribosomal protein uS2 family.

The protein is Small ribosomal subunit protein uS2 (rpsB) of Chlamydia trachomatis serovar D (strain ATCC VR-885 / DSM 19411 / UW-3/Cx).